Here is a 316-residue protein sequence, read N- to C-terminus: D-alanine--D-alanine ligase (316 aa).

Residues 109-304 (KRLWRGMDLP…FDEMVLQILA (196 aa)) form the ATP-grasp domain. 135–190 (AADLGLPLIVKPAREGSSLGMMKVESIEALQSAYREAVIFDTAVFAERWLPGAEYT) contributes to the ATP binding site. Mg(2+) contacts are provided by aspartate 258, glutamate 271, and asparagine 273.

It belongs to the D-alanine--D-alanine ligase family. It depends on Mg(2+) as a cofactor. The cofactor is Mn(2+).

It is found in the cytoplasm. It catalyses the reaction 2 D-alanine + ATP = D-alanyl-D-alanine + ADP + phosphate + H(+). It functions in the pathway cell wall biogenesis; peptidoglycan biosynthesis. Cell wall formation. The sequence is that of D-alanine--D-alanine ligase from Nitrosococcus oceani (strain ATCC 19707 / BCRC 17464 / JCM 30415 / NCIMB 11848 / C-107).